Consider the following 140-residue polypeptide: Small ribosomal subunit protein uS11c (140 aa).

It belongs to the universal ribosomal protein uS11 family. As to quaternary structure, part of the 30S ribosomal subunit.

It is found in the plastid. It localises to the chloroplast. This Pelargonium hortorum (Common geranium) protein is Small ribosomal subunit protein uS11c.